We begin with the raw amino-acid sequence, 589 residues long: uncharacterized protein (589 aa).

14 helical membrane-spanning segments follow: residues 90-110 (YIVIPGLMLSIFLSALDQTVI), 128-148 (SWIGTAYTLAQTSILPFCGIM), 162-182 (IVLFLFGSAMCGAAQNMLWLV), 189-209 (GIGGGGITSLVTIVIADITPL), 217-237 (GCMGVTWGLASVMGPLIGGAI), 245-265 (WIFFINLPTGGLSLALLIFFL), 284-304 (FVGIITITTGVVLFLVGLNIG), 311-331 (AHANVLCYLIFGILCIAGFVV), 355-375 (VMVTSFLHYYIVSTITYYIPV), 390-410 (VHTLSLAVVSSLLSAVSGMGI), 419-439 (PMIGGWIVLLAGTGSMIAIYY), 448-468 (GFLALTAVGTGNLFQPNLIAV), 483-503 (AFMLLRNMGASVGISMGAVIY), and 545-565 (IRMIWIVNCPVAGVGMLLSFF).

It belongs to the major facilitator superfamily. TCR/Tet family.

Its subcellular location is the membrane. This is an uncharacterized protein from Schizosaccharomyces pombe (strain 972 / ATCC 24843) (Fission yeast).